Here is a 365-residue protein sequence, read N- to C-terminus: Alternative oxidase 2, mitochondrial (365 aa).

Over residues 32–46 (TPPHSTTTTSPSSPA) the composition is skewed to low complexity. The interval 32–52 (TPPHSTTTTSPSSPAFHQPNH) is disordered. Fe cation-binding residues include E166, E205, and H208. Residues 220 to 242 (WFTRSIIYVGQGVFTNVFFLLYL) form a helical membrane-spanning segment. Fe cation is bound by residues E256, E257, E312, and H315. The segment at 345–365 (QPNHGINVMRPTGWEKQDLQL) is disordered.

Belongs to the alternative oxidase family. Requires Fe cation as cofactor.

It localises to the mitochondrion inner membrane. Functionally, catalyzes cyanide-resistant oxygen consumption. May increase respiration when the cytochrome respiratory pathway is restricted, or in response to low temperatures. The protein is Alternative oxidase 2, mitochondrial (AOX2) of Candida albicans (Yeast).